Reading from the N-terminus, the 269-residue chain is Phosphatidylglycerol--prolipoprotein diacylglyceryl transferase (269 aa).

7 helical membrane-spanning segments follow: residues 17-37 (IGPI…MLGW), 59-79 (FLVW…VLFY), 95-115 (WQGG…IIAF), 123-143 (LFQV…FGRI), 181-201 (AGLE…LTGI), 206-226 (GALS…SEFF), and 242-262 (MGQL…AWAL). Residue Arg142 coordinates a 1,2-diacyl-sn-glycero-3-phospho-(1'-sn-glycerol).

Belongs to the Lgt family.

It is found in the cell inner membrane. It carries out the reaction L-cysteinyl-[prolipoprotein] + a 1,2-diacyl-sn-glycero-3-phospho-(1'-sn-glycerol) = an S-1,2-diacyl-sn-glyceryl-L-cysteinyl-[prolipoprotein] + sn-glycerol 1-phosphate + H(+). It functions in the pathway protein modification; lipoprotein biosynthesis (diacylglyceryl transfer). Its function is as follows. Catalyzes the transfer of the diacylglyceryl group from phosphatidylglycerol to the sulfhydryl group of the N-terminal cysteine of a prolipoprotein, the first step in the formation of mature lipoproteins. This chain is Phosphatidylglycerol--prolipoprotein diacylglyceryl transferase, found in Paramagnetospirillum magneticum (strain ATCC 700264 / AMB-1) (Magnetospirillum magneticum).